Consider the following 248-residue polypeptide: Uracil-DNA glycosylase (248 aa).

Aspartate 85 functions as the Proton acceptor in the catalytic mechanism.

It belongs to the uracil-DNA glycosylase (UDG) superfamily. UNG family.

It localises to the cytoplasm. The catalysed reaction is Hydrolyzes single-stranded DNA or mismatched double-stranded DNA and polynucleotides, releasing free uracil.. Functionally, excises uracil residues from the DNA which can arise as a result of misincorporation of dUMP residues by DNA polymerase or due to deamination of cytosine. The sequence is that of Uracil-DNA glycosylase from Deinococcus deserti (strain DSM 17065 / CIP 109153 / LMG 22923 / VCD115).